Here is a 72-residue protein sequence, read N- to C-terminus: Small ribosomal subunit protein bS18 (72 aa).

Belongs to the bacterial ribosomal protein bS18 family. As to quaternary structure, part of the 30S ribosomal subunit. Forms a tight heterodimer with protein bS6.

Binds as a heterodimer with protein bS6 to the central domain of the 16S rRNA, where it helps stabilize the platform of the 30S subunit. In Fusobacterium nucleatum subsp. nucleatum (strain ATCC 25586 / DSM 15643 / BCRC 10681 / CIP 101130 / JCM 8532 / KCTC 2640 / LMG 13131 / VPI 4355), this protein is Small ribosomal subunit protein bS18.